A 203-amino-acid chain; its full sequence is A-type ATP synthase subunit E (203 aa).

The protein belongs to the V-ATPase E subunit family. Has multiple subunits with at least A(3), B(3), C, D, E, F, H, I and proteolipid K(x).

It localises to the cell membrane. Its function is as follows. Component of the A-type ATP synthase that produces ATP from ADP in the presence of a proton gradient across the membrane. In Thermococcus kodakarensis (strain ATCC BAA-918 / JCM 12380 / KOD1) (Pyrococcus kodakaraensis (strain KOD1)), this protein is A-type ATP synthase subunit E.